We begin with the raw amino-acid sequence, 356 residues long: Probable scoulerine-9-O-methyltransferase OMT2B (356 aa).

S-adenosyl-L-methionine is bound at residue M173. D176 is a binding site for substrate. S-adenosyl-L-methionine is bound by residues T177, G202, D225, D245–I246, and K259. Y260 to N264 is a binding site for substrate. Catalysis depends on H263, which acts as the Proton acceptor.

It belongs to the class I-like SAM-binding methyltransferase superfamily. Cation-independent O-methyltransferase family. COMT subfamily.

The catalysed reaction is (S)-scoulerine + S-adenosyl-L-methionine = (S)-tetrahydrocolumbamine + S-adenosyl-L-homocysteine + H(+). It functions in the pathway alkaloid biosynthesis. Its function is as follows. Methyltransferase involved in the biosynthesis of the benzylisoquinoline alkaloid noscapine. Catalyzes the conversion of (S)-scoulerine to (S)-tetrahydrocolumbamine. The heterodimers OMT2B-SOMT3 and OMT2B-6OMT do not possess 3-O-acetyl-4'-O-demethylpapaveroxine 4'-O-methyltransferase activity. This chain is Probable scoulerine-9-O-methyltransferase OMT2B, found in Papaver somniferum (Opium poppy).